A 557-amino-acid polypeptide reads, in one-letter code: TBCC domain-containing protein 1 (557 aa).

Residues 290–435 (TTKRAKIACN…LEDHMARTGL (146 aa)) form the C-CAP/cofactor C-like domain.

The protein belongs to the TBCC family.

Its subcellular location is the cytoplasm. The protein resides in the cytoskeleton. It localises to the microtubule organizing center. It is found in the centrosome. The protein localises to the spindle pole. Plays a role in the regulation of centrosome and Golgi apparatus positioning, with consequences on cell shape and cell migration. This Bos taurus (Bovine) protein is TBCC domain-containing protein 1 (TBCCD1).